Here is a 507-residue protein sequence, read N- to C-terminus: Natural resistance-associated macrophage protein 1 (507 aa).

Positions 1–36 (MIRDKNPQRVNRPSYGSISSLPSPAPQPEPSRNTYL) are disordered. At 1-39 (MIRDKNPQRVNRPSYGSISSLPSPAPQPEPSRNTYLSEK) the chain is on the cytoplasmic side. Positions 8 to 22 (QRVNRPSYGSISSLP) are enriched in polar residues. The chain crosses the membrane as a helical span at residues 40–60 (IPIPSTEQLLWVLLWATVLGL). Residues 61-123 (LCQRLAARLG…ISFNLLSAGR (63 aa)) lie on the Extracellular side of the membrane. Residues 124–144 (IPLWGGVLITIVDTFFFLFLD) form a helical membrane-spanning segment. The Cytoplasmic portion of the chain corresponds to 145-152 (NYGLRKLE). A helical transmembrane segment spans residues 153–173 (AFFGFLVTIMALTFGYEYVVA). The Extracellular portion of the chain corresponds to 174–199 (RPSQGALLKGLFLPSCPGCGQPELLQ). Residues 200 to 220 (AVGIVGAIIMPHNIYLHSALV) form a helical membrane-spanning segment. The Cytoplasmic segment spans residues 221–245 (KSREVDRTRRGDVREANMYFLTEAT). The chain crosses the membrane as a helical span at residues 246–266 (IALFVSFIINLFVMAVFGQAF). Residues 267–305 (YQQTNEEAFNICANSSLHNYAKIFPRDNNTVSVDIYQGG) are Extracellular-facing. N-linked (GlcNAc...) asparagine glycosylation is found at N280 and N294. Residues 306-326 (VILGCLFGPAALYIWAVGLLA) form a helical membrane-spanning segment. The Cytoplasmic segment spans residues 327 to 353 (AGQSSTMTGTYAGQFVMEGFLKLRWSR). Residues 354–374 (FARVLLTRSCAILPTVLVAVF) form a helical membrane-spanning segment. Topologically, residues 375–391 (RDLRDLSGLNDLLNVLQ) are extracellular. Residues 392 to 412 (SLLLPFAVLPILTFTSMPAVM) form a helical membrane-spanning segment. The Cytoplasmic segment spans residues 413-422 (QEFANGWLSK). Residues 423-443 (VITSCIMALVCAINLYFVISY) traverse the membrane as a helical segment. Residues 444–451 (LPSLPHPA) lie on the Extracellular side of the membrane. A helical transmembrane segment spans residues 452–472 (YFGLVALLAIGYLGLTAYLAW). Topologically, residues 473-507 (TCCIAHGAKFLTHSSHQRFLYGLPIEEQEGREGSG) are cytoplasmic.

This sequence belongs to the NRAMP family.

It is found in the late endosome membrane. It localises to the lysosome membrane. It carries out the reaction Zn(2+)(in) + H(+)(out) = Zn(2+)(out) + H(+)(in). It catalyses the reaction Fe(2+)(in) + H(+)(out) = Fe(2+)(out) + H(+)(in). The enzyme catalyses Mn(2+)(in) + H(+)(out) = Mn(2+)(out) + H(+)(in). Macrophage-specific antiporter that fluxes metal ions in either direction against a proton gradient. Localized to late endosomal lysosomal membranes, delivers bivalent cations from the cytosol into these acidic compartments where they may directly affect antimicrobial activity. Involved in iron metabolism and host natural resistance to infection with intracellular parasites. Pathogen resistance involves sequestration of Fe(2+) and Mn(2+), cofactors of both prokaryotic and eukaryotic catalases and superoxide dismutases, not only to protect the macrophage against its own generation of reactive oxygen species, but to deny the cations to the pathogen for synthesis of its protective enzymes. This is Natural resistance-associated macrophage protein 1 (Slc11a1) from Rattus norvegicus (Rat).